Reading from the N-terminus, the 1102-residue chain is Putative helicase/primase complex protein (1102 aa).

Disordered stretches follow at residues 1031–1057 and 1082–1102; these read TKEEISSTKEETYSTKEETYSTKEETC and EETCSIKEETSSIKEETFTET.

It belongs to the asfivirus F1055L family.

Its function is as follows. May be involved in DNA replication. This African swine fever virus (isolate Tick/Malawi/Lil 20-1/1983) (ASFV) protein is Putative helicase/primase complex protein.